A 66-amino-acid polypeptide reads, in one-letter code: DNA gyrase inhibitor YacG (66 aa).

Zn(2+)-binding residues include Cys-9, Cys-12, Cys-28, and Cys-32. The tract at residues 45 to 66 is disordered; it reads HKIAGSEGSEDELYSGDLEPRH.

Belongs to the DNA gyrase inhibitor YacG family. In terms of assembly, interacts with GyrB. Requires Zn(2+) as cofactor.

Inhibits all the catalytic activities of DNA gyrase by preventing its interaction with DNA. Acts by binding directly to the C-terminal domain of GyrB, which probably disrupts DNA binding by the gyrase. The sequence is that of DNA gyrase inhibitor YacG from Pseudomonas putida (strain ATCC 700007 / DSM 6899 / JCM 31910 / BCRC 17059 / LMG 24140 / F1).